The chain runs to 394 residues: Outer membrane protein S1 (394 aa).

Positions 1-21 are cleaved as a signal peptide; sequence MNRKVLALLVPALLVAGAANA. The interval 222–242 is disordered; it reads SSSDRSDNQVARGYGDGMNER.

The protein belongs to the Gram-negative porin family. In terms of assembly, homotrimer.

It localises to the cell outer membrane. In terms of biological role, forms pores that allow passive diffusion of small molecules across the outer membrane. The chain is Outer membrane protein S1 (ompS1) from Salmonella typhi.